We begin with the raw amino-acid sequence, 147 residues long: Response regulator Rcp1 (147 aa).

The region spanning 10-135 (VILLVEDSKA…DLFKMVQGIE (126 aa)) is the Response regulatory domain. Position 68 is a 4-aspartylphosphate (D68).

Post-translationally, phosphorylated by Cph1.

In terms of biological role, forms a two-component system with Cph1 in which it acts as receiver substrate. This Synechocystis sp. (strain ATCC 27184 / PCC 6803 / Kazusa) protein is Response regulator Rcp1 (rcp1).